Here is a 192-residue protein sequence, read N- to C-terminus: Probable cobalt-precorrin-6B C(15)-methyltransferase (decarboxylating) (192 aa).

Residues Thr-20, 44 to 48, Glu-68, and Ala-96 contribute to the S-adenosyl-L-methionine site; that span reads GSGTG.

It belongs to the methyltransferase superfamily. Archaeal-type CbiT family.

It catalyses the reaction Co-precorrin-6B + S-adenosyl-L-methionine = Co-precorrin-7 + S-adenosyl-L-homocysteine + CO2. Its pathway is cofactor biosynthesis; adenosylcobalamin biosynthesis; cob(II)yrinate a,c-diamide from sirohydrochlorin (anaerobic route): step 8/10. In terms of biological role, catalyzes the methylation of C-15 in cobalt-precorrin-6B followed by the decarboxylation of C-12 to form cobalt-precorrin-7. This is Probable cobalt-precorrin-6B C(15)-methyltransferase (decarboxylating) from Sulfurisphaera tokodaii (strain DSM 16993 / JCM 10545 / NBRC 100140 / 7) (Sulfolobus tokodaii).